The following is a 79-amino-acid chain: uncharacterized protein (79 aa).

Residues 15-37 (KSIVSVLALTSLGCGVFVISATA) form a helical membrane-spanning segment.

Its subcellular location is the membrane. This is an uncharacterized protein from Dictyostelium discoideum (Social amoeba).